A 246-amino-acid polypeptide reads, in one-letter code: Small ribosomal subunit protein uS2 (246 aa).

It belongs to the universal ribosomal protein uS2 family.

The sequence is that of Small ribosomal subunit protein uS2 from Burkholderia cenocepacia (strain HI2424).